Here is a 236-residue protein sequence, read N- to C-terminus: Leucyl/phenylalanyl-tRNA--protein transferase (236 aa).

This sequence belongs to the L/F-transferase family.

It localises to the cytoplasm. The enzyme catalyses N-terminal L-lysyl-[protein] + L-leucyl-tRNA(Leu) = N-terminal L-leucyl-L-lysyl-[protein] + tRNA(Leu) + H(+). It catalyses the reaction N-terminal L-arginyl-[protein] + L-leucyl-tRNA(Leu) = N-terminal L-leucyl-L-arginyl-[protein] + tRNA(Leu) + H(+). The catalysed reaction is L-phenylalanyl-tRNA(Phe) + an N-terminal L-alpha-aminoacyl-[protein] = an N-terminal L-phenylalanyl-L-alpha-aminoacyl-[protein] + tRNA(Phe). Its function is as follows. Functions in the N-end rule pathway of protein degradation where it conjugates Leu, Phe and, less efficiently, Met from aminoacyl-tRNAs to the N-termini of proteins containing an N-terminal arginine or lysine. This Shewanella sp. (strain ANA-3) protein is Leucyl/phenylalanyl-tRNA--protein transferase.